The chain runs to 465 residues: uncharacterized protein (465 aa).

The span at 1–15 shows a compositional bias: basic and acidic residues; it reads MEKNYIFENSIYKDE. 2 disordered regions span residues 1–31 and 288–320; these read MEKN…NNSS and QLEK…EQLP.

This is an uncharacterized protein from Dictyostelium discoideum (Social amoeba).